Here is a 142-residue protein sequence, read N- to C-terminus: MAKKVQAYVKLQVAAGMANPSPPVGPALGQQGVNIMEFCKAFNAKTESVEKGLPIPVVITVYSDRSFTFVTKTPPAAVLLKKAAGIKSGSGKPNKDKVGKVTSAQVREIAETKAADMTGSDVDAMARSIAGTARSMGLVVED.

This sequence belongs to the universal ribosomal protein uL11 family. As to quaternary structure, part of the ribosomal stalk of the 50S ribosomal subunit. Interacts with L10 and the large rRNA to form the base of the stalk. L10 forms an elongated spine to which L12 dimers bind in a sequential fashion forming a multimeric L10(L12)X complex. Post-translationally, one or more lysine residues are methylated.

In terms of biological role, forms part of the ribosomal stalk which helps the ribosome interact with GTP-bound translation factors. This is Large ribosomal subunit protein uL11 from Pectobacterium carotovorum subsp. carotovorum (strain PC1).